A 124-amino-acid polypeptide reads, in one-letter code: Small ribosomal subunit protein uS12 (124 aa).

The segment at 1–22 is disordered; that stretch reads MATINQLVRKPRSRKVAKSDVP. Asp89 bears the 3-methylthioaspartic acid mark. The interval 104 to 124 is disordered; it reads TAGVNDRRQGRSKYGAKRGKS. The segment covering 113–124 has biased composition (basic residues); it reads GRSKYGAKRGKS.

The protein belongs to the universal ribosomal protein uS12 family. Part of the 30S ribosomal subunit. Contacts proteins S8 and S17. May interact with IF1 in the 30S initiation complex.

Functionally, with S4 and S5 plays an important role in translational accuracy. Interacts with and stabilizes bases of the 16S rRNA that are involved in tRNA selection in the A site and with the mRNA backbone. Located at the interface of the 30S and 50S subunits, it traverses the body of the 30S subunit contacting proteins on the other side and probably holding the rRNA structure together. The combined cluster of proteins S8, S12 and S17 appears to hold together the shoulder and platform of the 30S subunit. In Hahella chejuensis (strain KCTC 2396), this protein is Small ribosomal subunit protein uS12.